The following is a 246-amino-acid chain: Heavy metal-associated isoprenylated plant protein 8 (246 aa).

A disordered region spans residues 1 to 31 (MGKNKQNGESDNKSEKKNQKNGDSSVDKSDK). Residues 35–99 (CKEIVLKVYM…RVQKKFSRNA (65 aa)) enclose the HMA 1 domain. The a metal cation site is built by Cys-46 and Cys-49. The interval 96-122 (SRNAEMISPKHNPKQDQKEPQQKKESA) is disordered. A compositionally biased stretch (basic and acidic residues) spans 108–122 (PKQDQKEPQQKKESA). Residues 125–189 (IKTAILRMNM…IKKKLGKHAE (65 aa)) enclose the HMA 2 domain. A metal cation-binding residues include Cys-136 and Cys-139. The tract at residues 191-226 (LSQITEKGKDNNKKNNNKKEESDGNKIFSYPPQYSS) is disordered. Over residues 196-214 (EKGKDNNKKNNNKKEESDG) the composition is skewed to basic and acidic residues. Residue Cys-243 is modified to Cysteine methyl ester. Residue Cys-243 is the site of S-farnesyl cysteine attachment. A propeptide spans 244–246 (SIM) (removed in mature form).

It belongs to the HIPP family.

Heavy-metal-binding protein. The polypeptide is Heavy metal-associated isoprenylated plant protein 8 (Arabidopsis thaliana (Mouse-ear cress)).